Here is a 329-residue protein sequence, read N- to C-terminus: DNA-directed RNA polymerase subunit alpha (329 aa).

Residues 1–234 (MQGSVTEFLK…EQLDAFVELR (234 aa)) form an alpha N-terminal domain (alpha-NTD) region. An alpha C-terminal domain (alpha-CTD) region spans residues 248–329 (FDPILLRPVD…WPPASLADDL (82 aa)).

This sequence belongs to the RNA polymerase alpha chain family. In terms of assembly, homodimer. The RNAP catalytic core consists of 2 alpha, 1 beta, 1 beta' and 1 omega subunit. When a sigma factor is associated with the core the holoenzyme is formed, which can initiate transcription.

The enzyme catalyses RNA(n) + a ribonucleoside 5'-triphosphate = RNA(n+1) + diphosphate. DNA-dependent RNA polymerase catalyzes the transcription of DNA into RNA using the four ribonucleoside triphosphates as substrates. The protein is DNA-directed RNA polymerase subunit alpha of Shewanella loihica (strain ATCC BAA-1088 / PV-4).